The primary structure comprises 927 residues: MEDPVQLKEEGNKYFQSNEYGQAIQCYSKALKLITDKKMQAVLYRNRSACYLKQDNYVQAAADASKAIDVDASDIKALFRRCQALEKLGKLDQAYKDVQRCATLEPKNRTFLETLHRLGTNIQEKLHVQFSTDSRVHKMFEILLDKNSEKEKREKAANNLIVLGREDAGAEQIFQNNGVNLLMQLIESKDPEMILSAIRTLSGMCTGHRARATAIVHLVGINKICSIMAVDNEEIALAACNLLQNIVDSLTGEDKKAHGKQEALVLDTKKDLKIITTHLLDMLVSKKVSGHGRDQALNLLNKNIPRYDLKNKDNSKSLFVVDAGLKKILKVLGQVPELPNCLPLTPNTRLNASVLVNKLYDDLRCDPERDNFRIICEEYITGSFDPKDMEKNLHAIQTVSGILQGPFDLGNKLLSLQGVMEMMVALTGSENEVDQLVAVEALIHASTKLSRASFIITNGVSLLKDIYKKTKNEKIKIRALVGLCKLGSAGGTDYALRQFAEGSTDKLAKQCRKWLCNPSLDIQTRKWAVEGLAYLTLDADVKDEFVEDEQSLKAMFELSKTSDKTILYSVATTLVNCTNSYDVKEVIPEMVQLAKFSKQHVPEQHPKDKKDFVEKRVKRLLKADVISALSCMVKADNSILTDQTKEQLSRVFLALCEDPKDRGIIVAQGGGKAMIPLALEGTDVGKIKASHGLAKIAAVSNPDIAFPGERVYEVVRPLVSLLNTERDGIQNFEALLALTNLSGKNDKLRQKIIKEKALPEIENYMFENHEQIRQAATECMCNLALNKEVKERFMAEGNDRLKLIILLCGEEDEVKLQRAAAGTLAMLTGAEKKLCHKMTEVTTQWMEILQRLCLSEDLQVQHRGVVIAYNLINADKELAKKLVESEMLEILTVIGKQADVPNKQHIINAAREALVKCLDYGFIKTVS.

TPR repeat units follow at residues proline 4 to lysine 37, alanine 41 to aspartate 74, and lysine 76 to asparagine 108. 3 ARM repeats span residues aspartate 167–threonine 206, arginine 209–aspartate 248, and aspartate 746–leucine 785.

Detected initially throughout the somites and the heart and gradually also expressed in the jaw, branchial arches and body wall muscles at later embryonic stages.

Its subcellular location is the cytoplasm. It localises to the myofibril. The protein localises to the sarcomere. It is found in the z line. The protein resides in the a band. Its subcellular location is the perinuclear region. It localises to the cytosol. Functionally, acts as a co-chaperone for HSP90 and is required for proper folding of the myosin motor domain. Plays a role in sarcomere formation during muscle cell development. Is necessary for normal early lens development. In Xenopus tropicalis (Western clawed frog), this protein is Protein unc-45 homolog B.